Consider the following 421-residue polypeptide: Putative hydro-lyase KRH_21160 (421 aa).

Disordered stretches follow at residues T200–T298 and T312–R421. The segment covering G224–R237 has biased composition (basic residues). Composition is skewed to low complexity over residues P243–P260 and S370–A380.

This sequence belongs to the D-glutamate cyclase family.

The sequence is that of Putative hydro-lyase KRH_21160 from Kocuria rhizophila (strain ATCC 9341 / DSM 348 / NBRC 103217 / DC2201).